The primary structure comprises 2698 residues: Zinc finger protein 292 (2698 aa).

The C2H2-type 1 zinc finger occupies 567–589 (YSCPICAKNFNSKDSFVPHVTLH). A Phosphoserine modification is found at Ser-654. 6 C2H2-type zinc fingers span residues 681 to 705 (FNCP…VKGH), 722 to 744 (VICQ…LQMH), 750 to 774 (YICI…RKEH), 779 to 803 (AKCL…EAQH), 807 to 831 (YTCK…QDGH), and 1085 to 1110 (FSCQ…KTAH). Positions 822-834 (SEMEKHQDGHSHP) are enriched in basic and acidic residues. The tract at residues 822 to 894 (SEMEKHQDGH…AEPAVTKHGQ (73 aa)) is disordered. At Lys-1104 the chain carries N6-acetyllysine. Ser-1146 carries the phosphoserine modification. The span at 1278–1325 (NSTNHYPSQTDGNINSSFLKGGSSENGVFPSQVSSADDFSSTSAQPST) shows a compositional bias: polar residues. The interval 1278–1349 (NSTNHYPSQT…KERKPKHNKR (72 aa)) is disordered. The C2H2-type 8; degenerate zinc finger occupies 1361–1383 (FICSRCYRAFTNPRSLGGHLSKR). 2 stretches are compositionally biased toward polar residues: residues 1574–1603 (FSSS…TRSS) and 1624–1633 (SVSNTSQNVL). Positions 1574–1656 (FSSSTEPPQN…PVPDTNTRSD (83 aa)) are disordered. C2H2-type zinc fingers lie at residues 1879 to 1904 (FVCQ…GKIH) and 1924 to 1949 (FKCV…QLVH). Positions 1964-1997 (PYGRKSQSENLSSPQNNQVKKQPSMAEETKTESQ) are disordered. A compositionally biased stretch (polar residues) spans 1971–1984 (SENLSSPQNNQVKK). At Lys-2020 the chain carries N6-acetyllysine. A compositionally biased stretch (basic and acidic residues) spans 2021–2032 (QLAEKKSPEKPE). The interval 2021-2075 (QLAEKKSPEKPESSSQPVTSSAEQYNANLANLKTKGRKNKRHRKEKEEKREKNPV) is disordered. The segment covering 2038 to 2051 (VTSSAEQYNANLAN) has biased composition (polar residues). The segment covering 2054–2064 (TKGRKNKRHRK) has biased composition (basic residues). C2H2-type zinc fingers lie at residues 2091 to 2116 (YCCV…QAVH), 2149 to 2174 (FRCQ…MKLH), 2193 to 2218 (FPCD…EVDH), and 2233 to 2258 (YKCD…FNKH). Basic residues predominate over residues 2262–2271 (HKAHLIRPRK). The tract at residues 2262 to 2323 (HKAHLIRPRK…KSNLENKSAK (62 aa)) is disordered. The segment at 2362-2386 (YPCMIKGCTSVVTSESNIIRHYKCH) adopts a C2H2-type 15 zinc-finger fold. Disordered regions lie at residues 2411-2454 (GKEI…GEKD), 2467-2553 (LINE…EEHP), and 2580-2608 (KQKK…HVDK). Residues 2421-2437 (KNDKKDPDSSVLEKNDN) are compositionally biased toward basic and acidic residues. The span at 2470–2488 (EDSTNAENQGNTTLKGNNE) shows a compositional bias: polar residues. Basic and acidic residues-rich tracts occupy residues 2489-2501 (FQEH…ERQK) and 2580-2590 (KQKKNSDRDHS). Positions 2596–2606 (RGSHSSSRRHV) are enriched in basic residues.

It belongs to the krueppel C2H2-type zinc-finger protein family. In terms of tissue distribution, expressed in postnatal day 1 (P1) pituitary. Also detected in presomatotrophic cell line GHFT1-5.

It localises to the nucleus. May be involved in transcriptional regulation. The chain is Zinc finger protein 292 from Mus musculus (Mouse).